The following is a 458-amino-acid chain: uncharacterized protein (458 aa).

Basic and acidic residues predominate over residues 1–10; sequence MQAEPKKSQA. Positions 1–20 are disordered; it reads MQAEPKKSQAEQRAVAEPVS. A TRAM domain is found at 23–84; that stretch reads VSLVGEEYEV…ARFLRADAVE (62 aa). [4Fe-4S] cluster is bound by residues cysteine 97, cysteine 105, cysteine 108, and cysteine 193. S-adenosyl-L-methionine is bound by residues glutamine 287, tyrosine 316, glutamate 340, and aspartate 384. Cysteine 411 (nucleophile) is an active-site residue.

The protein belongs to the class I-like SAM-binding methyltransferase superfamily. RNA M5U methyltransferase family.

This is an uncharacterized protein from Streptomyces coelicolor (strain ATCC BAA-471 / A3(2) / M145).